Consider the following 429-residue polypeptide: Histidine--tRNA ligase (429 aa).

The protein belongs to the class-II aminoacyl-tRNA synthetase family. Homodimer.

The protein resides in the cytoplasm. The enzyme catalyses tRNA(His) + L-histidine + ATP = L-histidyl-tRNA(His) + AMP + diphosphate + H(+). This Pseudomonas syringae pv. tomato (strain ATCC BAA-871 / DC3000) protein is Histidine--tRNA ligase.